The sequence spans 271 residues: Endonuclease V (271 aa).

The disordered stretch occupies residues 46–67 (TRTGDAPDVDQTTLSTSADDRT). Residues D76 and D140 each coordinate Mg(2+).

It belongs to the endonuclease V family. It depends on Mg(2+) as a cofactor.

It is found in the cytoplasm. The enzyme catalyses Endonucleolytic cleavage at apurinic or apyrimidinic sites to products with a 5'-phosphate.. DNA repair enzyme involved in the repair of deaminated bases. Selectively cleaves double-stranded DNA at the second phosphodiester bond 3' to a deoxyinosine leaving behind the intact lesion on the nicked DNA. This Haloarcula marismortui (strain ATCC 43049 / DSM 3752 / JCM 8966 / VKM B-1809) (Halobacterium marismortui) protein is Endonuclease V.